Consider the following 351-residue polypeptide: Photosystem II D2 protein (351 aa).

The chain crosses the membrane as a helical span at residues 39–59 (TAYLAIGGWLTGTTFVTSWYT). Histidine 116 contacts chlorophyll a. A helical membrane pass occupies residues 123-139 (GFMLRQFEIARLVGIRP). Positions 128 and 141 each coordinate pheophytin a. Residues 151 to 164 (VFVSVFLMYPLGQS) traverse the membrane as a helical segment. Residue histidine 196 participates in chlorophyll a binding. The chain crosses the membrane as a helical span at residues 206-226 (GALLCAIHGATVENTLFEDGE). A plastoquinone contacts are provided by histidine 213 and phenylalanine 260. Histidine 213 contributes to the Fe cation binding site. Position 267 (histidine 267) interacts with Fe cation. A helical membrane pass occupies residues 277–293 (GLWTSSIGIIGLALNLR).

This sequence belongs to the reaction center PufL/M/PsbA/D family. PSII is composed of 1 copy each of membrane proteins PsbA, PsbB, PsbC, PsbD, PsbE, PsbF, PsbH, PsbI, PsbJ, PsbK, PsbL, PsbM, PsbT, PsbX, PsbY, PsbZ, Psb30/Ycf12, peripheral proteins PsbO, CyanoQ (PsbQ), PsbU, PsbV and a large number of cofactors. It forms dimeric complexes. The D1/D2 heterodimer binds P680, chlorophylls that are the primary electron donor of PSII, and subsequent electron acceptors. It shares a non-heme iron and each subunit binds pheophytin, quinone, additional chlorophylls, carotenoids and lipids. There is also a Cl(-1) ion associated with D1 and D2, which is required for oxygen evolution. The PSII complex binds additional chlorophylls, carotenoids and specific lipids. serves as cofactor.

It localises to the cellular thylakoid membrane. The catalysed reaction is 2 a plastoquinone + 4 hnu + 2 H2O = 2 a plastoquinol + O2. Functionally, photosystem II (PSII) is a light-driven water:plastoquinone oxidoreductase that uses light energy to abstract electrons from H(2)O, generating O(2) and a proton gradient subsequently used for ATP formation. It consists of a core antenna complex that captures photons, and an electron transfer chain that converts photonic excitation into a charge separation. The D1/D2 (PsbA/PsbD) reaction center heterodimer binds P680, the primary electron donor of PSII as well as several subsequent electron acceptors. D2 is needed for assembly of a stable PSII complex. The protein is Photosystem II D2 protein of Synechococcus sp. (strain WH7803).